The following is a 482-amino-acid chain: Aspartyl/glutamyl-tRNA(Asn/Gln) amidotransferase subunit B (482 aa).

It belongs to the GatB/GatE family. GatB subfamily. In terms of assembly, heterotrimer of A, B and C subunits.

It catalyses the reaction L-glutamyl-tRNA(Gln) + L-glutamine + ATP + H2O = L-glutaminyl-tRNA(Gln) + L-glutamate + ADP + phosphate + H(+). It carries out the reaction L-aspartyl-tRNA(Asn) + L-glutamine + ATP + H2O = L-asparaginyl-tRNA(Asn) + L-glutamate + ADP + phosphate + 2 H(+). Functionally, allows the formation of correctly charged Asn-tRNA(Asn) or Gln-tRNA(Gln) through the transamidation of misacylated Asp-tRNA(Asn) or Glu-tRNA(Gln) in organisms which lack either or both of asparaginyl-tRNA or glutaminyl-tRNA synthetases. The reaction takes place in the presence of glutamine and ATP through an activated phospho-Asp-tRNA(Asn) or phospho-Glu-tRNA(Gln). In Azotobacter vinelandii (strain DJ / ATCC BAA-1303), this protein is Aspartyl/glutamyl-tRNA(Asn/Gln) amidotransferase subunit B.